A 94-amino-acid chain; its full sequence is Progonadoliberin-3 (94 aa).

Residues 1-23 form the signal peptide; the sequence is MEWKGRVLVQLLMLVCVLEVSLC. A Pyrrolidone carboxylic acid modification is found at Gln24. Gly33 is subject to Glycine amide.

Belongs to the GnRH family.

It is found in the secreted. In terms of biological role, stimulates the secretion of gonadotropins. The polypeptide is Progonadoliberin-3 (gnrh3) (Rutilus rutilus (Roach)).